The sequence spans 2541 residues: Talin-1 (2541 aa).

An FERM domain is found at 86 to 403 (RPLKIRMLDG…GYIDIILKKK (318 aa)). The interval 280–435 (FMAHKNCGNM…PKKSTVLQQQ (156 aa)) is interaction with LAYN. The segment at 482 to 655 (RGHMPPLTSA…QTSGELLQQI (174 aa)) is helical bundle R1. Residues 656–786 (GESDTDPRFQ…ALNDLLQHIK (131 aa)) are helical bundle R2. Positions 787 to 911 (QHATGGQPIG…NAAAQNAIKK (125 aa)) are helical bundle R3. Residues 913 to 1043 (LVHKLEHAAK…RTAAQKAQEA (131 aa)) are helical bundle R4. Residues 1045-1205 (GPLEIDSALG…NRCVNCLPGQ (161 aa)) are helical bundle R5. The helical bundle R6 stretch occupies residues 1206–1356 (RDVDAAIRMV…QLITMCTQQA (151 aa)). A helical bundle R7A region spans residues 1357–1452 (PGQKECDNAL…AYLVGVSDPN (96 aa)). An interaction with VCL and F-actin region spans residues 1358–1658 (GQKECDNALR…NMRDKAPGQR (301 aa)). Residues 1460-1579 (LVDPTQFARA…NLTAFASNPE (120 aa)) form a helical bundle R8 region. Threonine 1486 carries O-linked (GlcNAc) threonine glycosylation. A helical bundle R7B region spans residues 1580-1652 (FATVPAQISP…IKKLITNMRD (73 aa)). The segment at 1654-1821 (APGQRECDEA…TLNEAASAAG (168 aa)) is helical bundle R9. The interval 1822 to 1972 (VVGGMVDSIT…VLAALQAGNR (151 aa)) is helical bundle R10. Threonine 1889 carries an O-linked (GlcNAc) threonine glycan. Residues 1973-2139 (GTQACITAAS…TVKAVEDEAT (167 aa)) form a helical bundle R11 region. Residues 2140–2293 (KGTRALEATI…QAAEAMKGTE (154 aa)) form a helical bundle R12 region. The 240-residue stretch at 2292–2531 (TEWVDPEDPT…MIRQQQYKFL (240 aa)) folds into the I/LWEQ domain. The helical bundle R13 stretch occupies residues 2299 to 2481 (DPTVIAENEL…AAQKAAAFQD (183 aa)).

As to quaternary structure, interacts with PIP5K1C and NRAP. Binds with high affinity to vinculin VCL and with low affinity to integrins. Interacts with APBB1IP; this inhibits VCL binding. Interacts with F-actin. Interacts with LAYN. Interacts with THSD1. Post-translationally, phosphorylated.

Its subcellular location is the cell projection. The protein resides in the ruffle membrane. The protein localises to the cytoplasm. It is found in the cytoskeleton. It localises to the cell surface. Its subcellular location is the cell junction. The protein resides in the focal adhesion. Its function is as follows. High molecular weight cytoskeletal protein concentrated at regions of cell-substratum contact and, in lymphocytes, at cell-cell contacts. Involved in connections of major cytoskeletal structures to the plasma membrane. The protein is Talin-1 (TLN1) of Gallus gallus (Chicken).